The primary structure comprises 307 residues: NAD kinase 1 (307 aa).

Residue Asp67 is the Proton acceptor of the active site. NAD(+) contacts are provided by residues 67-68, 149-150, Arg179, and Asp181; these read DG and ND.

The protein belongs to the NAD kinase family. The cofactor is a divalent metal cation.

It is found in the cytoplasm. The catalysed reaction is NAD(+) + ATP = ADP + NADP(+) + H(+). Involved in the regulation of the intracellular balance of NAD and NADP, and is a key enzyme in the biosynthesis of NADP. Catalyzes specifically the phosphorylation on 2'-hydroxyl of the adenosine moiety of NAD to yield NADP. The protein is NAD kinase 1 of Prochlorococcus marinus (strain SARG / CCMP1375 / SS120).